The following is a 239-amino-acid chain: Peroxygenase (239 aa).

At glycine 2 the chain carries N-acetylglycine. An EF-hand domain is found at 60 to 95; the sequence is HNMSVLQQRAAFFDRNNDGIVYPWETYQGFRAVGFG. Positions 73, 75, 77, and 84 each coordinate Ca(2+). The Proline-knot motif lies at 116 to 125; sequence PSWIPSPVLS.

The protein belongs to the caleosin family. As to quaternary structure, homodimer. It depends on heme b as a cofactor. Requires Ca(2+) as cofactor. As to expression, expressed in pollen (at protein level). Not expressed in leaf, root, stem, tepal, ovary, style, filament or stigma (at protein level).

The protein localises to the lipid droplet. It localises to the microsome membrane. It carries out the reaction RH + ROOH = ROH + ROH.. Calcium-binding peroxygenase involved in the degradation of storage lipid in oil bodies. This is Peroxygenase from Lilium longiflorum (Trumpet lily).